A 204-amino-acid chain; its full sequence is Dephospho-CoA kinase (204 aa).

One can recognise a DPCK domain in the interval 12-204 (RIGVTGGIAS…AWRDQISSIC (193 aa)). 20–25 (ASGKSS) provides a ligand contact to ATP.

It belongs to the CoaE family.

The protein localises to the cytoplasm. The catalysed reaction is 3'-dephospho-CoA + ATP = ADP + CoA + H(+). The protein operates within cofactor biosynthesis; coenzyme A biosynthesis; CoA from (R)-pantothenate: step 5/5. Functionally, catalyzes the phosphorylation of the 3'-hydroxyl group of dephosphocoenzyme A to form coenzyme A. The protein is Dephospho-CoA kinase of Prochlorococcus marinus (strain MIT 9313).